The sequence spans 428 residues: Sarcosine reductase complex component B subunit alpha (428 aa).

At Cys-242 the chain carries Pyruvic acid (Cys).

In terms of assembly, heterotetramer of two alpha and two beta subunits. Component of the sarcosine reductase complex, together with components A and C. PB is substrate specific. The peptide chain is cleaved into beta and alpha chains, and the alpha chain N-terminal cysteine is deaminated and oxidized to form a reactive pyruvoyl group.

The enzyme catalyses acetyl phosphate + methylamine + [thioredoxin]-disulfide + H2O = sarcosine + [thioredoxin]-dithiol + phosphate + H(+). Its function is as follows. In the first step of sarcosine reductase, the substrate is bound to component PB via a Schiff base intermediate. Then the PB-activated substrate is nucleophilically attacked by the selenol anion of component PA to transform it to a carboxymethylated selenoether and the respective amine. By action of component PC, acetyl phosphate is formed, leaving component PA in its oxidized state. Finally component PA becomes reduced by the thioredoxin system to start a new catalytic cycle of reductive deamination. This chain is Sarcosine reductase complex component B subunit alpha (grdG), found in Peptoclostridium acidaminophilum (Eubacterium acidaminophilum).